The chain runs to 90 residues: UPF0213 protein lwe0147 (90 aa).

The 79-residue stretch at 5–83 (NEHFFYVLKC…SRKNKDSYLI (79 aa)) folds into the GIY-YIG domain.

This sequence belongs to the UPF0213 family.

The chain is UPF0213 protein lwe0147 from Listeria welshimeri serovar 6b (strain ATCC 35897 / DSM 20650 / CCUG 15529 / CIP 8149 / NCTC 11857 / SLCC 5334 / V8).